The following is a 235-amino-acid chain: Putative N-acetylmannosamine-6-phosphate 2-epimerase (235 aa).

The protein belongs to the NanE family.

It catalyses the reaction an N-acyl-D-glucosamine 6-phosphate = an N-acyl-D-mannosamine 6-phosphate. Its pathway is amino-sugar metabolism; N-acetylneuraminate degradation; D-fructose 6-phosphate from N-acetylneuraminate: step 3/5. Converts N-acetylmannosamine-6-phosphate (ManNAc-6-P) to N-acetylglucosamine-6-phosphate (GlcNAc-6-P). In Aliivibrio fischeri (strain ATCC 700601 / ES114) (Vibrio fischeri), this protein is Putative N-acetylmannosamine-6-phosphate 2-epimerase.